An 880-amino-acid chain; its full sequence is Alanine--tRNA ligase (880 aa).

Zn(2+)-binding residues include histidine 567, histidine 571, cysteine 669, and histidine 673.

Belongs to the class-II aminoacyl-tRNA synthetase family. Zn(2+) is required as a cofactor.

The protein resides in the cytoplasm. The enzyme catalyses tRNA(Ala) + L-alanine + ATP = L-alanyl-tRNA(Ala) + AMP + diphosphate. Its function is as follows. Catalyzes the attachment of alanine to tRNA(Ala) in a two-step reaction: alanine is first activated by ATP to form Ala-AMP and then transferred to the acceptor end of tRNA(Ala). Also edits incorrectly charged Ser-tRNA(Ala) and Gly-tRNA(Ala) via its editing domain. The sequence is that of Alanine--tRNA ligase from Syntrophomonas wolfei subsp. wolfei (strain DSM 2245B / Goettingen).